We begin with the raw amino-acid sequence, 429 residues long: Aspartate--tRNA(Asp/Asn) ligase (429 aa).

Glu167 serves as a coordination point for L-aspartate. The interval 189 to 192 (QLYK) is aspartate. L-aspartate is bound at residue Arg210. ATP-binding positions include 210–212 (RAE) and Glu352. 2 residues coordinate Mg(2+): Glu352 and Ser355. L-aspartate contacts are provided by Ser355 and Arg359. 400–403 (GLAR) lines the ATP pocket.

The protein belongs to the class-II aminoacyl-tRNA synthetase family. Type 2 subfamily. As to quaternary structure, homodimer. Mg(2+) is required as a cofactor.

The protein localises to the cytoplasm. It carries out the reaction tRNA(Asx) + L-aspartate + ATP = L-aspartyl-tRNA(Asx) + AMP + diphosphate. In terms of biological role, aspartyl-tRNA synthetase with relaxed tRNA specificity since it is able to aspartylate not only its cognate tRNA(Asp) but also tRNA(Asn). Reaction proceeds in two steps: L-aspartate is first activated by ATP to form Asp-AMP and then transferred to the acceptor end of tRNA(Asp/Asn). The protein is Aspartate--tRNA(Asp/Asn) ligase of Saccharolobus solfataricus (strain ATCC 35092 / DSM 1617 / JCM 11322 / P2) (Sulfolobus solfataricus).